The chain runs to 422 residues: Elongation factor 1-alpha (422 aa).

In terms of domain architecture, tr-type G spans lysine 5–serine 221. The G1 stretch occupies residues glycine 14–serine 21. GTP is bound at residue glycine 14–serine 21. Serine 21 contributes to the Mg(2+) binding site. The interval glycine 70–aspartate 74 is G2. The tract at residues aspartate 91–glycine 94 is G3. Residues aspartate 91–histidine 95 and asparagine 146–aspartate 149 each bind GTP. Residues asparagine 146 to aspartate 149 are G4. The segment at serine 185 to phenylalanine 187 is G5.

Belongs to the TRAFAC class translation factor GTPase superfamily. Classic translation factor GTPase family. EF-Tu/EF-1A subfamily.

It localises to the cytoplasm. It catalyses the reaction GTP + H2O = GDP + phosphate + H(+). GTP hydrolase that promotes the GTP-dependent binding of aminoacyl-tRNA to the A-site of ribosomes during protein biosynthesis. In Methanosarcina barkeri (strain Fusaro / DSM 804), this protein is Elongation factor 1-alpha.